Reading from the N-terminus, the 189-residue chain is HGPRTase-like protein (189 aa).

The protein belongs to the purine/pyrimidine phosphoribosyltransferase family. Archaeal HPRT subfamily.

Its function is as follows. May catalyze a purine salvage reaction, the substrate is unknown. This Halomicrobium mukohataei (strain ATCC 700874 / DSM 12286 / JCM 9738 / NCIMB 13541) (Haloarcula mukohataei) protein is HGPRTase-like protein.